We begin with the raw amino-acid sequence, 472 residues long: Methylenetetrahydrofolate--tRNA-(uracil-5-)-methyltransferase TrmFO (472 aa).

Residue 10–15 participates in FAD binding; it reads GGGLAG.

This sequence belongs to the MnmG family. TrmFO subfamily. FAD serves as cofactor.

It is found in the cytoplasm. The catalysed reaction is uridine(54) in tRNA + (6R)-5,10-methylene-5,6,7,8-tetrahydrofolate + NADH + H(+) = 5-methyluridine(54) in tRNA + (6S)-5,6,7,8-tetrahydrofolate + NAD(+). It carries out the reaction uridine(54) in tRNA + (6R)-5,10-methylene-5,6,7,8-tetrahydrofolate + NADPH + H(+) = 5-methyluridine(54) in tRNA + (6S)-5,6,7,8-tetrahydrofolate + NADP(+). Catalyzes the folate-dependent formation of 5-methyl-uridine at position 54 (M-5-U54) in all tRNAs. This Mesorhizobium japonicum (strain LMG 29417 / CECT 9101 / MAFF 303099) (Mesorhizobium loti (strain MAFF 303099)) protein is Methylenetetrahydrofolate--tRNA-(uracil-5-)-methyltransferase TrmFO.